The sequence spans 149 residues: Transcriptional regulator MraZ (149 aa).

2 consecutive SpoVT-AbrB domains span residues 7-54 (KYVN…GISH) and 83-126 (AVQL…QPQN).

The protein belongs to the MraZ family. As to quaternary structure, forms oligomers.

The protein resides in the cytoplasm. The protein localises to the nucleoid. This Rickettsia akari (strain Hartford) protein is Transcriptional regulator MraZ.